The primary structure comprises 241 residues: Zinc finger CCHC domain-containing protein 17 (241 aa).

The region spanning 16 to 88 (YTIFQGEVAM…DRIKVSLSMK (73 aa)) is the S1 motif domain. At Ser-114 the chain carries Phosphoserine. Residues 131–148 (TTCKKCGCKGHFAKDCFM) form a CCHC-type zinc finger. Residue Lys-144 is modified to N6-acetyllysine. Positions 160–241 (EEEEEKEEAK…KKKHKKKHKE (82 aa)) are disordered. Basic and acidic residues predominate over residues 166-178 (EEAKAEGLEKPDP). The span at 182–198 (SSRKRKKEKKKKKHRDR) shows a compositional bias: basic residues. The residue at position 183 (Ser-183) is a Phosphoserine. Basic and acidic residues predominate over residues 211–225 (DTGKKARHSSKDSKA). Residues 226–241 (TKKKKKKKKHKKKHKE) are compositionally biased toward basic residues.

Interacts with PNN. Associates with the 60S ribosomal subunit. As to expression, expressed in liver, brain, heart, kidney testis, stomach, small intestine, skin, thymus, uterus, placenta, spleen, lung and skeletal muscle.

The protein resides in the nucleus. It localises to the nucleolus. The chain is Zinc finger CCHC domain-containing protein 17 (Zcchc17) from Mus musculus (Mouse).